The sequence spans 450 residues: Regulator of sigma E protease (450 aa).

Residue His22 participates in Zn(2+) binding. The active site involves Glu23. His26 lines the Zn(2+) pocket. The chain crosses the membrane as a helical span at residues Ala98–Phe120. PDZ domains are found at residues Ala115–Gly186 and His199–Thr291. The next 2 membrane-spanning stretches (helical) occupy residues Val376 to Leu398 and Phe426 to Asn445.

The protein belongs to the peptidase M50B family. In terms of assembly, interacts with RseA. Requires Zn(2+) as cofactor.

Its subcellular location is the cell inner membrane. Functionally, a site-2 regulated intramembrane protease (S2P) that cleaves the peptide bond between 'Ala-108' and 'Cys-109' in the transmembrane region of RseA. Part of a regulated intramembrane proteolysis (RIP) cascade. Acts on DegS-cleaved RseA to release the cytoplasmic domain of RseA. This provides the cell with sigma-E (RpoE) activity through the proteolysis of RseA. This is Regulator of sigma E protease (rseP) from Salmonella typhi.